The primary structure comprises 192 residues: N-terminal acetyltransferase A complex catalytic subunit NAA10 (192 aa).

Residues 2 to 152 form the N-acetyltransferase domain; it reads VCIRRATVDD…DAYDMRKNLK (151 aa).

It belongs to the acetyltransferase family. ARD1 subfamily. In terms of assembly, part of the NatA complex. Interacts with NAA15. In terms of tissue distribution, expressed in leaves, roots, shoots and flowers.

It catalyses the reaction N-terminal glycyl-[protein] + acetyl-CoA = N-terminal N(alpha)-acetylglycyl-[protein] + CoA + H(+). The enzyme catalyses N-terminal L-alanyl-[protein] + acetyl-CoA = N-terminal N(alpha)-acetyl-L-alanyl-[protein] + CoA + H(+). The catalysed reaction is N-terminal L-seryl-[protein] + acetyl-CoA = N-terminal N(alpha)-acetyl-L-seryl-[protein] + CoA + H(+). It carries out the reaction N-terminal L-valyl-[protein] + acetyl-CoA = N-terminal N(alpha)-acetyl-L-valyl-[protein] + CoA + H(+). It catalyses the reaction N-terminal L-cysteinyl-[protein] + acetyl-CoA = N-terminal N(alpha)-acetyl-L-cysteinyl-[protein] + CoA + H(+). The enzyme catalyses N-terminal L-threonyl-[protein] + acetyl-CoA = N-terminal N(alpha)-acetyl-L-threonyl-[protein] + CoA + H(+). In terms of biological role, catalytic subunit of the NatA N-alpha-acetyltransferase complex. Required for male gametocyte development, embryogenesis, suspensor development and the formation of the quiescent center (QC) in the root meristem. Involved in plant immunity through the regulation of SNC1 and RPM1 stability. The chain is N-terminal acetyltransferase A complex catalytic subunit NAA10 from Arabidopsis thaliana (Mouse-ear cress).